A 1099-amino-acid polypeptide reads, in one-letter code: Protein DDB_G0287365 (1099 aa).

The first 24 residues, 1–24 (MMSFNLILILIIFLILIQNYVIDG), serve as a signal peptide directing secretion. The 128-residue stretch at 47–174 (KSWKKLKLPI…TKTTWTKLIS (128 aa)) folds into the G8 domain. N-linked (GlcNAc...) asparagine glycosylation is found at Asn-62, Asn-137, Asn-664, Asn-764, and Asn-858.

Belongs to the CEMIP family.

This chain is Protein DDB_G0287365, found in Dictyostelium discoideum (Social amoeba).